Here is a 489-residue protein sequence, read N- to C-terminus: Rhamnulokinase (489 aa).

13–17 (ASSGR) serves as a coordination point for ATP. Cysteine 68 and cysteine 222 are oxidised to a cystine. Substrate contacts are provided by residues glycine 83 and 236-238 (HDT). The active-site Proton acceptor is the aspartate 237. Threonine 259 contacts ATP. Asparagine 296 is a substrate binding site. Position 304 (glutamine 304) interacts with ATP. Cysteine 353 and cysteine 370 are disulfide-bonded. Glycine 402 serves as a coordination point for ATP. A disulfide bridge links cysteine 413 with cysteine 417.

The protein belongs to the rhamnulokinase family. Mg(2+) serves as cofactor.

The enzyme catalyses L-rhamnulose + ATP = L-rhamnulose 1-phosphate + ADP + H(+). It functions in the pathway carbohydrate degradation; L-rhamnose degradation; glycerone phosphate from L-rhamnose: step 2/3. In terms of biological role, involved in the catabolism of L-rhamnose (6-deoxy-L-mannose). Catalyzes the transfer of the gamma-phosphate group from ATP to the 1-hydroxyl group of L-rhamnulose to yield L-rhamnulose 1-phosphate. This Salmonella heidelberg (strain SL476) protein is Rhamnulokinase.